The following is a 274-amino-acid chain: Reaction center protein L chain (274 aa).

Residues 2 to 32 (ALLSFERKYRVRGGTLIGGDLFDFWVGPYFV) lie on the Cytoplasmic side of the membrane. A helical membrane pass occupies residues 33–53 (GFFGVSAIFFIFLGVSLIGYA). Residues 54-83 (ASQGPTWDPFAISINPPDLKYGLGAAPLLE) are Periplasmic-facing. The chain crosses the membrane as a helical span at residues 84–111 (GGFWQAITVCALGAFISWMLREVEISRK). Residues 112–115 (LGIG) are Cytoplasmic-facing. Residues 116 to 139 (WHVPLAFCVPIFMFCVLQVFRPLL) traverse the membrane as a helical segment. Residues 140-170 (LGSWGHAFPYGILSHLDWVNNFGYQYLNWHY) are Periplasmic-facing. (7R,8Z)-bacteriochlorophyll b contacts are provided by His154 and His174. A helical membrane pass occupies residues 171 to 198 (NPGHMSSVSFLFVNAMALGLHGGLILSV). Fe cation is bound at residue His191. Residues 199–225 (ANPGDGDKVKTAEHENQYFRDVVGYSI) lie on the Cytoplasmic side of the membrane. Phe217 contributes to the a ubiquinone binding site. Residues 226–249 (GALSIHRLGLFLASNIFLTGAFGT) form a helical membrane-spanning segment. His231 contacts Fe cation. Topologically, residues 250 to 274 (IASGPFWTRGWPEWWGWWLDIPFWS) are periplasmic.

Belongs to the reaction center PufL/M/PsbA/D family. Reaction center is composed of four bacteriochlorophylls, two bacteriopheophytins, two ubiquinones, one iron, and three highly hydrophobic polypeptide chains (designated L, M, and H).

Its subcellular location is the cellular chromatophore membrane. Its function is as follows. The reaction center is a membrane-bound complex that mediates the initial photochemical event in the electron transfer process of photosynthesis. This is Reaction center protein L chain (pufL) from Blastochloris viridis (Rhodopseudomonas viridis).